Here is a 240-residue protein sequence, read N- to C-terminus: MKIDILTLFPEMFAPLEHSIVGKAQTKGLLEINYHNFRENAEKARHVDDEPYGGGQGMLLRAQPIFDTFDKIAAKKPRVILLDPAGQQFNQSYAEDLAQEGELIFICGHYEGYDERIKTLVTDEISLGDFILTGGELAAMTIIDATVRLIPEVIGKEASHQDDSFSSGLLEYPQYTRPYEYRGMKVPDVLLSGHHENIRLWRLEQSLRKTWERRPDLLEHYQFTQEEKQLLEKIKSEGSS.

Residues glycine 108 and 127-132 (LGDFIL) contribute to the S-adenosyl-L-methionine site.

Belongs to the RNA methyltransferase TrmD family. Homodimer.

It localises to the cytoplasm. The enzyme catalyses guanosine(37) in tRNA + S-adenosyl-L-methionine = N(1)-methylguanosine(37) in tRNA + S-adenosyl-L-homocysteine + H(+). Its function is as follows. Specifically methylates guanosine-37 in various tRNAs. The protein is tRNA (guanine-N(1)-)-methyltransferase of Streptococcus mutans serotype c (strain ATCC 700610 / UA159).